Here is a 301-residue protein sequence, read N- to C-terminus: 5'-adenylylsulfate reductase-like 5 (301 aa).

An N-terminal signal peptide occupies residues 1-21 (MTRCAVVAAVAAVLLVAGAAA). The region spanning 51–164 (CIRIEPSPPV…LVDFYKETTG (114 aa)) is the Thioredoxin domain. Residue Asn139 is glycosylated (N-linked (GlcNAc...) asparagine). A helical transmembrane segment spans residues 201 to 221 (FVLLAVLFIILKVAAHFVPIV). An N-linked (GlcNAc...) asparagine glycan is attached at Asn268.

It localises to the membrane. This is 5'-adenylylsulfate reductase-like 5 (APRL5) from Oryza sativa subsp. japonica (Rice).